The sequence spans 350 residues: Pro-cathepsin H (350 aa).

The N-terminal stretch at 1–19 (MAQWTLLIVFFCVATAAAG) is a signal peptide. The propeptide at 20–113 (LSFHDSNPIR…WEEFRSHRLG (94 aa)) is activation peptide. The N-linked (GlcNAc...) asparagine glycan is linked to asparagine 117. Positions 122–132 (LKGNHRITDVV) are cleaved as a propeptide — removed in mature form. 2 disulfides stabilise this stretch: cysteine 154/cysteine 197 and cysteine 188/cysteine 230. Cysteine 157 is a catalytic residue. A glycan (N-linked (GlcNAc...) asparagine) is linked at asparagine 177. Residue asparagine 246 is glycosylated (N-linked (GlcNAc...) asparagine). Cysteines 288 and 338 form a disulfide. Catalysis depends on residues histidine 297 and asparagine 317.

This sequence belongs to the peptidase C1 family. Interacts with KPI104 and KPI106. Composed of a mini chain and a large chain. The large chain may be split into heavy and light chain. All chains are held together by disulfide bonds.

The protein resides in the vacuole. The protein localises to the lysosome. It catalyses the reaction Hydrolysis of proteins, acting as an aminopeptidase (notably, cleaving Arg-|-Xaa bonds) as well as an endopeptidase.. Functionally, may play a role in proteolysis leading to mobilization of nitrogen during senescence and starvation. In Medicago truncatula (Barrel medic), this protein is Pro-cathepsin H.